Reading from the N-terminus, the 334-residue chain is TPR repeat-containing protein YsoA (334 aa).

TPR repeat units follow at residues 17 to 50 (KDRL…DDTE), 52 to 84 (DLHL…GYGH), and 195 to 230 (HPII…EPSE).

This is TPR repeat-containing protein YsoA (ysoA) from Bacillus subtilis (strain 168).